The following is a 161-amino-acid chain: UPF0262 protein mll6455 (161 aa).

It belongs to the UPF0262 family.

This Mesorhizobium japonicum (strain LMG 29417 / CECT 9101 / MAFF 303099) (Mesorhizobium loti (strain MAFF 303099)) protein is UPF0262 protein mll6455.